Here is a 461-residue protein sequence, read N- to C-terminus: Epidermin leader peptide-processing serine protease EpiP (461 aa).

The signal sequence occupies residues 1–23 (MNKFKFFIVFLILSLVFLQNEYA). The 339-residue stretch at 121 to 459 (QWDMRKITNE…NGKLDVYKLL (339 aa)) folds into the Peptidase S8 domain. Catalysis depends on charge relay system residues aspartate 149, histidine 194, and serine 402.

This sequence belongs to the peptidase S8 family.

Its pathway is antibiotic biosynthesis; epidermin biosynthesis. Its function is as follows. Protease which cleaves the matured lantibiotic from the modified prepeptide. The sequence is that of Epidermin leader peptide-processing serine protease EpiP (epiP) from Staphylococcus epidermidis.